A 92-amino-acid polypeptide reads, in one-letter code: Mediator-associated protein 3 (92 aa).

A DEK-C domain is found at 13–70 (KDLRRKIKKTVKKILESSNLYKITEIKAREEASLKLDLDLSQDPYKVIVKEEVENFLE).

In terms of assembly, associated with the Mediator complex.

Its subcellular location is the nucleus. This is Mediator-associated protein 3 from Arabidopsis thaliana (Mouse-ear cress).